The sequence spans 630 residues: Pentatricopeptide repeat-containing protein At1g63130, mitochondrial (630 aa).

A mitochondrion-targeting transit peptide spans 1–22 (MRRLFAISSTGNRFVHRSLLGK). 15 PPR repeats span residues 80-114 (SIVEFSKLLSAIAKMNKFDLVISLGEQMQNLGISH), 115-149 (NLYTYSILINCFCRRSQLSLALAVLAKMMKLGYEP), 150-184 (DIVTLNSLLNGFCHGNRISDAVSLVGQMVEMGYQP), 185-219 (DSFTFNTLIHGLFRHNRASEAVALVDRMVVKGCQP), 220-254 (DLVTYGIVVNGLCKRGDIDLALSLLKKMEQGKIEP), 255-289 (GVVIYNTIIDALCNYKNVNDALNLFTEMDNKGIRP), 290-324 (NVVTYNSLIRCLCNYGRWSDASRLLSDMIERKINP), 325-359 (NVVTFSALIDAFVKEGKLVEAEKLYDEMIKRSIDP), 360-394 (DIFTYSSLINGFCMHDRLDEAKHMFELMISKDCFP), 395-429 (NVVTYNTLIKGFCKAKRVDEGMELFREMSQRGLVG), 430-464 (NTVTYTTLIHGFFQARECDNAQIVFKQMVSDGVLP), 465-499 (DIMTYSILLDGLCNNGKVETALVVFEYLQRSKMEP), 500-534 (DIYTYNIMIEGMCKAGKVEDGWDLFCSLSLKGVKP), 535-569 (NVVTYTTMMSGFCRKGLKEEADALFREMKEEGPLP), and 570-604 (DSGTYNTLIRAHLRDGDKAASAELIREMRSCRFVG).

It belongs to the PPR family. P subfamily.

The protein localises to the mitochondrion. This Arabidopsis thaliana (Mouse-ear cress) protein is Pentatricopeptide repeat-containing protein At1g63130, mitochondrial.